Consider the following 37-residue polypeptide: MKIRASVRKICEKCQLIRRRGRILVICSNPRHKQRQG.

It belongs to the bacterial ribosomal protein bL36 family.

Its subcellular location is the plastid. It is found in the chloroplast. This is Large ribosomal subunit protein bL36c from Chloranthus spicatus (Chulantree).